A 706-amino-acid chain; its full sequence is Elongation factor G (706 aa).

The tr-type G domain occupies 8–297 (ERVRNIGIAA…AVIDYLPAPT (290 aa)). GTP-binding positions include 17-24 (AHIDAGKT), 96-100 (DTPGH), and 150-153 (NKMD).

The protein belongs to the TRAFAC class translation factor GTPase superfamily. Classic translation factor GTPase family. EF-G/EF-2 subfamily.

The protein resides in the cytoplasm. Functionally, catalyzes the GTP-dependent ribosomal translocation step during translation elongation. During this step, the ribosome changes from the pre-translocational (PRE) to the post-translocational (POST) state as the newly formed A-site-bound peptidyl-tRNA and P-site-bound deacylated tRNA move to the P and E sites, respectively. Catalyzes the coordinated movement of the two tRNA molecules, the mRNA and conformational changes in the ribosome. The sequence is that of Elongation factor G from Cyanothece sp. (strain PCC 7425 / ATCC 29141).